Consider the following 385-residue polypeptide: ATP phosphoribosyltransferase regulatory subunit (385 aa).

This sequence belongs to the class-II aminoacyl-tRNA synthetase family. HisZ subfamily. Heteromultimer composed of HisG and HisZ subunits.

It is found in the cytoplasm. It functions in the pathway amino-acid biosynthesis; L-histidine biosynthesis; L-histidine from 5-phospho-alpha-D-ribose 1-diphosphate: step 1/9. Functionally, required for the first step of histidine biosynthesis. May allow the feedback regulation of ATP phosphoribosyltransferase activity by histidine. In Bordetella parapertussis (strain 12822 / ATCC BAA-587 / NCTC 13253), this protein is ATP phosphoribosyltransferase regulatory subunit.